The following is a 77-amino-acid chain: Translation initiation factor IF-1, chloroplastic (77 aa).

An S1-like domain is found at 1 to 71 (MKEQKLIHEG…TRGRIIYRLR (71 aa)).

The protein belongs to the IF-1 family. Component of the 30S ribosomal translation pre-initiation complex which assembles on the 30S ribosome in the order IF-2 and IF-3, IF-1 and N-formylmethionyl-tRNA(fMet); mRNA recruitment can occur at any time during PIC assembly.

It is found in the plastid. Its subcellular location is the chloroplast. Its function is as follows. One of the essential components for the initiation of protein synthesis. Stabilizes the binding of IF-2 and IF-3 on the 30S subunit to which N-formylmethionyl-tRNA(fMet) subsequently binds. Helps modulate mRNA selection, yielding the 30S pre-initiation complex (PIC). Upon addition of the 50S ribosomal subunit IF-1, IF-2 and IF-3 are released leaving the mature 70S translation initiation complex. The chain is Translation initiation factor IF-1, chloroplastic from Calycanthus floridus var. glaucus (Eastern sweetshrub).